A 157-amino-acid polypeptide reads, in one-letter code: Peptide methionine sulfoxide reductase MsrA (157 aa).

Residue Cys-13 is part of the active site.

The protein belongs to the MsrA Met sulfoxide reductase family.

It catalyses the reaction L-methionyl-[protein] + [thioredoxin]-disulfide + H2O = L-methionyl-(S)-S-oxide-[protein] + [thioredoxin]-dithiol. It carries out the reaction [thioredoxin]-disulfide + L-methionine + H2O = L-methionine (S)-S-oxide + [thioredoxin]-dithiol. Has an important function as a repair enzyme for proteins that have been inactivated by oxidation. Catalyzes the reversible oxidation-reduction of methionine sulfoxide in proteins to methionine. The sequence is that of Peptide methionine sulfoxide reductase MsrA from Methanococcus maripaludis (strain C5 / ATCC BAA-1333).